Reading from the N-terminus, the 389-residue chain is MGRGLMNSLKPYLAMISMQFGYAGMYIITMVSLKHGMNHYVLAVYRHAIATAVIAPFALFHERKIRPKMTFRIFLQIALLGFIEPVLDQNLYYVGMTYTSATFASATANVLPAITFVLAIIFRLESVNFKKVRSIAKVVGTVITVSGALLMTLYKGPIVDFIRFGGGGGGGSDGAGGSHGGAGAAAMDKHWIPGTLMLLGRTFGWAGFFILQSFTLKQYPAELSLTTLICLMGTLEGTAVSLVTVRDLSAWKIGFDSNLFAAAYSGVICSGVAYYVQGVVMRERGPVFVATFNPLCVVITAALGVVVLSESIHLGSVIGTLFIIVGLYTVVWGKGKDKRMTDDDEDCKGLPIKSPVKPVDTGKGLAAELEMKSKEGQEAKATTTTQVEI.

The next 10 helical transmembrane spans lie at 13–33 (LAMISMQFGYAGMYIITMVSL), 40–60 (YVLAVYRHAIATAVIAPFALF), 73–93 (IFLQIALLGFIEPVLDQNLYY), 102–122 (TFASATANVLPAITFVLAIIF), 142–162 (VITVSGALLMTLYKGPIVDFI), 191–211 (WIPGTLMLLGRTFGWAGFFIL), 225–245 (LTTLICLMGTLEGTAVSLVTV), 260–280 (FAAAYSGVICSGVAYYVQGVV), 287–307 (VFVATFNPLCVVITAALGVVV), and 312–332 (IHLGSVIGTLFIIVGLYTVVW). 2 consecutive EamA domains span residues 23–150 (AGMY…GALL) and 205–331 (WAGF…YTVV). The segment at 339-361 (RMTDDDEDCKGLPIKSPVKPVDT) is disordered.

It belongs to the drug/metabolite transporter (DMT) superfamily. Plant drug/metabolite exporter (P-DME) (TC 2.A.7.4) family.

Its subcellular location is the membrane. In Arabidopsis thaliana (Mouse-ear cress), this protein is WAT1-related protein At1g21890.